Here is a 447-residue protein sequence, read N- to C-terminus: MDIFSEKRILTVSQLTSLIRGVLEENFEHVWVEGEVSNLATPASGHLYFTLKDGAAQIRCVMFRASSRALKFRPRDGMGLIVRGRVTVYDQRGEYQLLVEYLEPRGIGALQLAFIQLKEQLAREGLFADEHKKPIPPLPQKIGVVTSATGAAIHDILTVLNRRFANVEILIRPVKVQGEGAAEEIAAAIDDFNRYGVIDVMIVGRGGGSLEDLWAFNEEMVARAIHRSRIPVISAVGHEVDFTIADFVADLRAPTPSAAAELVVKSKEELAARLEFLRHRLVQGGRQVLAERRGELDSLNRSLRDPSMLVGHLSQRVDDLSARLERGTANSVRRHRGSLDLLTTNLRLTNPAVRLERARERVIALAGRNETLLRRFLDHLREKTLVAAARLDTLSPLATMARGYSIVLKLPERCLVTDSARLAPGDRVELCLRRGRAGCCVESSSDT.

Belongs to the XseA family. As to quaternary structure, heterooligomer composed of large and small subunits.

The protein resides in the cytoplasm. It carries out the reaction Exonucleolytic cleavage in either 5'- to 3'- or 3'- to 5'-direction to yield nucleoside 5'-phosphates.. In terms of biological role, bidirectionally degrades single-stranded DNA into large acid-insoluble oligonucleotides, which are then degraded further into small acid-soluble oligonucleotides. This is Exodeoxyribonuclease 7 large subunit from Geobacter sulfurreducens (strain ATCC 51573 / DSM 12127 / PCA).